Reading from the N-terminus, the 93-residue chain is YcgL domain-containing protein VIBHAR_01387 (93 aa).

The 84-residue stretch at 1–84 (MLCSIYKSSR…PPENLLEKYK (84 aa)) folds into the YcgL domain.

The chain is YcgL domain-containing protein VIBHAR_01387 from Vibrio campbellii (strain ATCC BAA-1116).